Reading from the N-terminus, the 180-residue chain is Large ribosomal subunit protein uL5 (180 aa).

This sequence belongs to the universal ribosomal protein uL5 family. As to quaternary structure, part of the 50S ribosomal subunit; part of the 5S rRNA/L5/L18/L25 subcomplex. Contacts the 5S rRNA and the P site tRNA. Forms a bridge to the 30S subunit in the 70S ribosome.

Its function is as follows. This is one of the proteins that bind and probably mediate the attachment of the 5S RNA into the large ribosomal subunit, where it forms part of the central protuberance. In the 70S ribosome it contacts protein S13 of the 30S subunit (bridge B1b), connecting the 2 subunits; this bridge is implicated in subunit movement. Contacts the P site tRNA; the 5S rRNA and some of its associated proteins might help stabilize positioning of ribosome-bound tRNAs. The sequence is that of Large ribosomal subunit protein uL5 from Ligilactobacillus salivarius (strain UCC118) (Lactobacillus salivarius).